The chain runs to 418 residues: Methylmalonic aciduria type A protein, mitochondrial (418 aa).

A mitochondrion-targeting transit peptide spans 1 to 65; that stretch reads MPMLLPHPHQ…LLSDGLKRKL (65 aa). GTP is bound by residues 150–158, aspartate 292, and 328–330; these read GPPGAGKST and SAR.

Belongs to the SIMIBI class G3E GTPase family. ArgK/MeaB subfamily. As to quaternary structure, homodimer. Interacts with MMUT (the apoenzyme form); the interaction is GTP dependent. Widely expressed. Highest expression is observed in liver and skeletal muscle.

Its subcellular location is the mitochondrion. The protein localises to the cytoplasm. It catalyses the reaction GTP + H2O = GDP + phosphate + H(+). Its activity is regulated as follows. GTPase activity is stimulated by MMUT. GTPase, binds and hydrolyzes GTP. Involved in intracellular vitamin B12 metabolism, mediates the transport of cobalamin (Cbl) into mitochondria for the final steps of adenosylcobalamin (AdoCbl) synthesis. Functions as a G-protein chaperone that assists AdoCbl cofactor delivery from MMAB to the methylmalonyl-CoA mutase (MMUT). Plays a dual role as both a protectase and a reactivase for MMUT. Protects MMUT from progressive inactivation by oxidation by decreasing the rate of the formation of the oxidized inactive cofactor hydroxocobalamin (OH2Cbl). Additionally acts a reactivase by promoting the replacement of OH2Cbl by the active cofactor AdoCbl, restoring the activity of MMUT in the presence and hydrolysis of GTP. The protein is Methylmalonic aciduria type A protein, mitochondrial of Homo sapiens (Human).